We begin with the raw amino-acid sequence, 229 residues long: ATP-dependent dethiobiotin synthetase BioD (229 aa).

Position 12-17 (12-17 (GVGKTV)) interacts with ATP. Thr-16 is a binding site for Mg(2+). Lys-37 is an active-site residue. Thr-41 is a substrate binding site. ATP contacts are provided by residues Asp-53, 112–115 (EGAG), and 201–203 (PAG). 2 residues coordinate Mg(2+): Asp-53 and Glu-112.

Belongs to the dethiobiotin synthetase family. In terms of assembly, homodimer. Mg(2+) serves as cofactor.

Its subcellular location is the cytoplasm. The catalysed reaction is (7R,8S)-7,8-diammoniononanoate + CO2 + ATP = (4R,5S)-dethiobiotin + ADP + phosphate + 3 H(+). Its pathway is cofactor biosynthesis; biotin biosynthesis; biotin from 7,8-diaminononanoate: step 1/2. Functionally, catalyzes a mechanistically unusual reaction, the ATP-dependent insertion of CO2 between the N7 and N8 nitrogen atoms of 7,8-diaminopelargonic acid (DAPA, also called 7,8-diammoniononanoate) to form a ureido ring. This is ATP-dependent dethiobiotin synthetase BioD from Mycobacterium sp. (strain KMS).